A 302-amino-acid chain; its full sequence is Probable 2-(5''-triphosphoribosyl)-3'-dephosphocoenzyme-A synthase (302 aa).

The protein belongs to the CitG/MdcB family.

The enzyme catalyses 3'-dephospho-CoA + ATP = 2'-(5''-triphospho-alpha-D-ribosyl)-3'-dephospho-CoA + adenine. The chain is Probable 2-(5''-triphosphoribosyl)-3'-dephosphocoenzyme-A synthase from Citrobacter koseri (strain ATCC BAA-895 / CDC 4225-83 / SGSC4696).